The following is an 870-amino-acid chain: DNA mismatch repair protein MutS (870 aa).

ATP is bound at residue 620 to 627; the sequence is GPNMAGKS.

This sequence belongs to the DNA mismatch repair MutS family.

In terms of biological role, this protein is involved in the repair of mismatches in DNA. It is possible that it carries out the mismatch recognition step. This protein has a weak ATPase activity. In Acetivibrio thermocellus (strain ATCC 27405 / DSM 1237 / JCM 9322 / NBRC 103400 / NCIMB 10682 / NRRL B-4536 / VPI 7372) (Clostridium thermocellum), this protein is DNA mismatch repair protein MutS.